The sequence spans 675 residues: Serine/threonine-protein kinase ATG1 (675 aa).

Residues 25-328 (FVIGGEIGKG…FEDFFNDPVV (304 aa)) enclose the Protein kinase domain. Residues 31–39 (IGKGSFAQV) and Lys54 contribute to the ATP site. Asp168 functions as the Proton acceptor in the catalytic mechanism. Positions 339-374 (DIPKVEQKPSRDLRSLEADPQREQSELAKSPRERPL) are enriched in basic and acidic residues. Disordered regions lie at residues 339–455 (DIPK…ERKL) and 501–577 (RLTS…TTRS). 3 stretches are compositionally biased toward polar residues: residues 390-399 (ANVSARTGQS), 516-538 (ATQQGPPTSTTGAGRMQPSSAVQ), and 556-565 (ASRSLNTSSA).

The protein belongs to the protein kinase superfamily. Ser/Thr protein kinase family. APG1/unc-51/ULK1 subfamily. Homodimer. Forms a ternary complex with ATG13 and ATG17.

The protein resides in the cytoplasm. The protein localises to the preautophagosomal structure membrane. The catalysed reaction is L-seryl-[protein] + ATP = O-phospho-L-seryl-[protein] + ADP + H(+). It catalyses the reaction L-threonyl-[protein] + ATP = O-phospho-L-threonyl-[protein] + ADP + H(+). Functionally, serine/threonine protein kinase involved in the cytoplasm to vacuole transport (Cvt) and found to be essential in autophagy, where it is required for the formation of autophagosomes. Involved in the clearance of protein aggregates which cannot be efficiently cleared by the proteasome. Required for selective autophagic degradation of the nucleus (nucleophagy) as well as for mitophagy which contributes to regulate mitochondrial quantity and quality by eliminating the mitochondria to a basal level to fulfill cellular energy requirements and preventing excess ROS production. Also involved in endoplasmic reticulum-specific autophagic process, in selective removal of ER-associated degradation (ERAD) substrates. Plays a key role in ATG9 and ATG23 cycling through the pre-autophagosomal structure and is necessary to promote ATG18 binding to ATG9 through phosphorylation of ATG9. Catalyzes phosphorylation of ATG4, decreasing the interaction between ATG4 and ATG8 and impairing deconjugation of PE-conjugated forms of ATG8. This Colletotrichum lindemuthianum (Bean anthracnose fungus) protein is Serine/threonine-protein kinase ATG1.